The chain runs to 306 residues: MEIILANPRGFCAGVERAIAIVERALEKFGAPIYVRHEVVHNKFVCDDLRAKGAVFVEELDEVPAGSTVIFSAHGVSKAVREDAEARGLKVFDATCPLVTKVHVEVGKMRNQTREVVMIGHKGHPEVEGTMGQSQGGMYLVETADEVAQLQVSDPLHLSFVTQTTLSVDDATVVIDALKQRFPEIQGPKKDDICYATQNRQDAVKELAGKCDLVLVVGSPNSSNSRRLKEVAVGRNVMAFLIDDAEEIEESWLRGKQHIGVTAGASAPETLVERVVMHIQALTGASVTHLKGIEEGISFPLPKDLN.

Cys-12 contributes to the [4Fe-4S] cluster binding site. The (2E)-4-hydroxy-3-methylbut-2-enyl diphosphate site is built by His-41 and His-74. Residues His-41 and His-74 each contribute to the dimethylallyl diphosphate site. Isopentenyl diphosphate-binding residues include His-41 and His-74. Residue Cys-96 participates in [4Fe-4S] cluster binding. Residue His-124 participates in (2E)-4-hydroxy-3-methylbut-2-enyl diphosphate binding. Dimethylallyl diphosphate is bound at residue His-124. His-124 provides a ligand contact to isopentenyl diphosphate. Glu-126 (proton donor) is an active-site residue. Thr-164 provides a ligand contact to (2E)-4-hydroxy-3-methylbut-2-enyl diphosphate. Cys-194 is a [4Fe-4S] cluster binding site. Residues Ser-222, Ser-223, Asn-224, and Ser-266 each contribute to the (2E)-4-hydroxy-3-methylbut-2-enyl diphosphate site. Residues Ser-222, Ser-223, Asn-224, and Ser-266 each contribute to the dimethylallyl diphosphate site. Positions 222, 223, 224, and 266 each coordinate isopentenyl diphosphate.

It belongs to the IspH family. It depends on [4Fe-4S] cluster as a cofactor.

The catalysed reaction is isopentenyl diphosphate + 2 oxidized [2Fe-2S]-[ferredoxin] + H2O = (2E)-4-hydroxy-3-methylbut-2-enyl diphosphate + 2 reduced [2Fe-2S]-[ferredoxin] + 2 H(+). It carries out the reaction dimethylallyl diphosphate + 2 oxidized [2Fe-2S]-[ferredoxin] + H2O = (2E)-4-hydroxy-3-methylbut-2-enyl diphosphate + 2 reduced [2Fe-2S]-[ferredoxin] + 2 H(+). The protein operates within isoprenoid biosynthesis; dimethylallyl diphosphate biosynthesis; dimethylallyl diphosphate from (2E)-4-hydroxy-3-methylbutenyl diphosphate: step 1/1. It functions in the pathway isoprenoid biosynthesis; isopentenyl diphosphate biosynthesis via DXP pathway; isopentenyl diphosphate from 1-deoxy-D-xylulose 5-phosphate: step 6/6. Functionally, catalyzes the conversion of 1-hydroxy-2-methyl-2-(E)-butenyl 4-diphosphate (HMBPP) into a mixture of isopentenyl diphosphate (IPP) and dimethylallyl diphosphate (DMAPP). Acts in the terminal step of the DOXP/MEP pathway for isoprenoid precursor biosynthesis. In Dechloromonas aromatica (strain RCB), this protein is 4-hydroxy-3-methylbut-2-enyl diphosphate reductase.